Reading from the N-terminus, the 503-residue chain is Sarpagan bridge enzyme 1 (503 aa).

The chain crosses the membrane as a helical; Signal-anchor for type II membrane protein span at residues isoleucine 3–threonine 23. Heme is bound at residue cysteine 442.

The protein belongs to the cytochrome P450 family. Heme is required as a cofactor. Highly expressed in roots. Expressed at low levels in leaves, stems and flowers.

It is found in the endoplasmic reticulum membrane. The catalysed reaction is (19E)-geissoschizine + reduced [NADPH--hemoprotein reductase] + O2 = polyneuridine aldehyde + oxidized [NADPH--hemoprotein reductase] + 2 H2O + H(+). The enzyme catalyses tetrahydroalstonine + A + reduced [NADPH--hemoprotein reductase] + O2 = alstonine + AH2 + oxidized [NADPH--hemoprotein reductase] + 2 H2O + H(+). It catalyses the reaction ajmalicine + A + reduced [NADPH--hemoprotein reductase] + O2 = serpentine + AH2 + oxidized [NADPH--hemoprotein reductase] + 2 H2O + H(+). It participates in alkaloid biosynthesis; ajmaline biosynthesis. Its function is as follows. Monooxygenase involved in the biosynthesis of ajmaline-type monoterpenoid indole alkaloids (MIAs) natural products, important plant-derived pharmaceuticals used in the therapy of heart disorders. Converts by cyclization the strictosidine-derived geissoschizine to the sarpagan alkaloid polyneuridine aldehyde, precursor of vomilenine, an intermediate chemical in the biosynthesis of ajmaline. Converts by aromatization the tetrahydro-beta-carboline alkaloids tetrahydroalstonine and ajmalicine to the corresponding beta-carboline alkaloids alstonine and serpentine, respectively. The sequence is that of Sarpagan bridge enzyme 1 from Rauvolfia serpentina (Serpentine wood).